Consider the following 431-residue polypeptide: Probable oxidoreductase OrdL (431 aa).

In Haemophilus influenzae (strain ATCC 51907 / DSM 11121 / KW20 / Rd), this protein is Probable oxidoreductase OrdL (ordL).